Here is an 883-residue protein sequence, read N- to C-terminus: Translation initiation factor IF-2 (883 aa).

A disordered region spans residues 118 to 261; sequence VARESEAAPA…KKKEAFKKTE (144 aa). The segment covering 124–150 has biased composition (low complexity); the sequence is AAPAEEPVAAAVKPASEPPVVQKAPVA. 2 stretches are compositionally biased toward basic and acidic residues: residues 183–200 and 252–261; these read PADR…EERI and KKKEAFKKTE. The tr-type G domain maps to 383-552; sequence KRPPVVTIMG…LLQADVMDLK (170 aa). The G1 stretch occupies residues 392 to 399; sequence GHVDHGKT. 392–399 is a GTP binding site; the sequence is GHVDHGKT. The segment at 417-421 is G2; the sequence is GITQH. Residues 438–441 form a G3 region; that stretch reads DTPG. GTP contacts are provided by residues 438 to 442 and 492 to 495; these read DTPGH and NKID. The interval 492-495 is G4; it reads NKID. The G5 stretch occupies residues 528 to 530; that stretch reads SAK.

This sequence belongs to the TRAFAC class translation factor GTPase superfamily. Classic translation factor GTPase family. IF-2 subfamily.

The protein localises to the cytoplasm. One of the essential components for the initiation of protein synthesis. Protects formylmethionyl-tRNA from spontaneous hydrolysis and promotes its binding to the 30S ribosomal subunits. Also involved in the hydrolysis of GTP during the formation of the 70S ribosomal complex. The chain is Translation initiation factor IF-2 from Geobacter sulfurreducens (strain ATCC 51573 / DSM 12127 / PCA).